Here is a 396-residue protein sequence, read N- to C-terminus: Protein RepA (396 aa).

2 disordered regions span residues 141-170 and 356-396; these read SKELGKTGGRPRKKDSEEEPEKKPEEVTKK and NQYK…LPTT. Positions 154 to 168 are enriched in basic and acidic residues; it reads KDSEEEPEKKPEEVT.

The protein is Protein RepA (repA) of Bacillus subtilis.